A 128-amino-acid chain; its full sequence is Large ribosomal subunit protein bL12 (128 aa).

The protein belongs to the bacterial ribosomal protein bL12 family. In terms of assembly, homodimer. Part of the ribosomal stalk of the 50S ribosomal subunit. Forms a multimeric L10(L12)X complex, where L10 forms an elongated spine to which 2 to 4 L12 dimers bind in a sequential fashion. Binds GTP-bound translation factors.

Functionally, forms part of the ribosomal stalk which helps the ribosome interact with GTP-bound translation factors. Is thus essential for accurate translation. The polypeptide is Large ribosomal subunit protein bL12 (Kineococcus radiotolerans (strain ATCC BAA-149 / DSM 14245 / SRS30216)).